The following is a 147-amino-acid chain: Deoxyuridine 5'-triphosphate nucleotidohydrolase (147 aa).

Residues 67 to 69 (RSG), N80, and 84 to 86 (TID) contribute to the substrate site.

It belongs to the dUTPase family. It depends on Mg(2+) as a cofactor.

It carries out the reaction dUTP + H2O = dUMP + diphosphate + H(+). It participates in pyrimidine metabolism; dUMP biosynthesis; dUMP from dCTP (dUTP route): step 2/2. In terms of biological role, this enzyme is involved in nucleotide metabolism: it produces dUMP, the immediate precursor of thymidine nucleotides and it decreases the intracellular concentration of dUTP so that uracil cannot be incorporated into DNA. This Anaeromyxobacter dehalogenans (strain 2CP-1 / ATCC BAA-258) protein is Deoxyuridine 5'-triphosphate nucleotidohydrolase.